Consider the following 217-residue polypeptide: Protein-L-isoaspartate O-methyltransferase (217 aa).

S61 is a catalytic residue.

Belongs to the methyltransferase superfamily. L-isoaspartyl/D-aspartyl protein methyltransferase family.

The protein localises to the cytoplasm. The enzyme catalyses [protein]-L-isoaspartate + S-adenosyl-L-methionine = [protein]-L-isoaspartate alpha-methyl ester + S-adenosyl-L-homocysteine. In terms of biological role, catalyzes the methyl esterification of L-isoaspartyl residues in peptides and proteins that result from spontaneous decomposition of normal L-aspartyl and L-asparaginyl residues. It plays a role in the repair and/or degradation of damaged proteins. This Brucella anthropi (strain ATCC 49188 / DSM 6882 / CCUG 24695 / JCM 21032 / LMG 3331 / NBRC 15819 / NCTC 12168 / Alc 37) (Ochrobactrum anthropi) protein is Protein-L-isoaspartate O-methyltransferase.